Reading from the N-terminus, the 535-residue chain is CTP synthase (535 aa).

Residues 1 to 267 are amidoligase domain; sequence MTKYIFVTGG…DQIVCDHLKL (267 aa). S13 is a CTP binding site. S13 lines the UTP pocket. Position 14 to 19 (14 to 19) interacts with ATP; sequence SLGKGI. Y54 is an L-glutamine binding site. Position 71 (D71) interacts with ATP. D71 and E141 together coordinate Mg(2+). CTP contacts are provided by residues 148–150, 188–193, and K224; these read DIE and KTKPTQ. UTP-binding positions include 188-193 and K224; that span reads KTKPTQ. ATP is bound at residue 240–242; that stretch reads RDA. In terms of domain architecture, Glutamine amidotransferase type-1 spans 292-534; it reads KIALVGKYVE…VRASITNKES (243 aa). G354 lines the L-glutamine pocket. The Nucleophile; for glutamine hydrolysis role is filled by C381. L-glutamine-binding positions include 382–385, E405, and R462; that span reads LGMQ. Active-site residues include H507 and E509.

It belongs to the CTP synthase family. In terms of assembly, homotetramer.

The enzyme catalyses UTP + L-glutamine + ATP + H2O = CTP + L-glutamate + ADP + phosphate + 2 H(+). The catalysed reaction is L-glutamine + H2O = L-glutamate + NH4(+). It catalyses the reaction UTP + NH4(+) + ATP = CTP + ADP + phosphate + 2 H(+). It participates in pyrimidine metabolism; CTP biosynthesis via de novo pathway; CTP from UDP: step 2/2. With respect to regulation, allosterically activated by GTP, when glutamine is the substrate; GTP has no effect on the reaction when ammonia is the substrate. The allosteric effector GTP functions by stabilizing the protein conformation that binds the tetrahedral intermediate(s) formed during glutamine hydrolysis. Inhibited by the product CTP, via allosteric rather than competitive inhibition. Its function is as follows. Catalyzes the ATP-dependent amination of UTP to CTP with either L-glutamine or ammonia as the source of nitrogen. Regulates intracellular CTP levels through interactions with the four ribonucleotide triphosphates. The protein is CTP synthase of Bacillus cereus (strain ATCC 10987 / NRS 248).